We begin with the raw amino-acid sequence, 259 residues long: Phosphate import ATP-binding protein PstB 1 (259 aa).

One can recognise an ABC transporter domain in the interval 13 to 254; it reads IQVRGLEFFY…PSKTQTEDYI (242 aa). 45–52 contributes to the ATP binding site; the sequence is GPSGCGKS.

This sequence belongs to the ABC transporter superfamily. Phosphate importer (TC 3.A.1.7) family. In terms of assembly, the complex is composed of two ATP-binding proteins (PstB), two transmembrane proteins (PstC and PstA) and a solute-binding protein (PstS).

Its subcellular location is the cell inner membrane. It carries out the reaction phosphate(out) + ATP + H2O = ADP + 2 phosphate(in) + H(+). Part of the ABC transporter complex PstSACB involved in phosphate import. Responsible for energy coupling to the transport system. The chain is Phosphate import ATP-binding protein PstB 1 from Pseudomonas syringae pv. tomato (strain ATCC BAA-871 / DC3000).